The chain runs to 86 residues: U1-theraphotoxin-Pc1a (86 aa).

An N-terminal signal peptide occupies residues Met-1 to Gly-21. The propeptide occupies His-22–Glu-49. 3 cysteine pairs are disulfide-bonded: Cys-53/Cys-70, Cys-60/Cys-75, and Cys-69/Cys-80. Val-84 is subject to Valine amide.

As to expression, expressed by the venom gland.

The protein localises to the secreted. Its function is as follows. Possesses strong antiplasmodial activity against the intra-erythrocyte stage of P.falciparum in vitro. IC(50) for inhibiting P.falciparum growth is 1.59 uM. Interacts with infected and healthy erythrocytes. Does not lyse erythrocytes, is not cytotoxic to nucleated mammalian cells, and does not inhibit neuromuscular function. Has neither antibacterial nor antifungal activity. In Psalmopoeus cambridgei (Trinidad chevron tarantula), this protein is U1-theraphotoxin-Pc1a.